The sequence spans 511 residues: Centrosomal protein CCDC61 (511 aa).

A head domain region spans residues 1 to 144 (MEVGTVVQEE…PLPLPYLGKP (144 aa)). Residues 147–272 (AELQKEIRAL…RVKSLTTELA (126 aa)) are a coiled coil. Disordered regions lie at residues 306 to 403 (TRVG…SREP) and 447 to 486 (RGRKLMSNGPAVSRGRHINKKPMCSTPAQRMRAGDTSMDT). Residues 315–335 (GSRERIEDRGRRSEERVRRAD) show a composition bias toward basic and acidic residues. The span at 338 to 352 (GSRNCITRPSPSPTG) shows a compositional bias: polar residues. Residues 366–378 (DRQRRQKEAELKS) show a composition bias toward basic and acidic residues.

It belongs to the CCDC61 family. Forms homodimers (via head domain).

The protein localises to the cytoplasm. It is found in the cytoskeleton. Its subcellular location is the microtubule organizing center. It localises to the centrosome. The protein resides in the centriolar satellite. The protein localises to the cilium basal body. Microtubule-binding centrosomal protein required for centriole cohesion, independently of the centrosome-associated protein/CEP250 and rootletin/CROCC linker. In interphase, required for anchoring microtubule at the mother centriole subdistal appendages and for centrosome positioning. During mitosis, may be involved in spindle assembly and chromatin alignment by regulating the organization of spindle microtubules into a symmetrical structure. Plays a non-essential role in ciliogenesis. The sequence is that of Centrosomal protein CCDC61 from Danio rerio (Zebrafish).